A 591-amino-acid chain; its full sequence is L-fucose isomerase (591 aa).

Catalysis depends on proton acceptor residues E337 and D361. Mn(2+) contacts are provided by E337, D361, and H528.

The protein belongs to the L-fucose isomerase family. In terms of assembly, homohexamer. Requires Mn(2+) as cofactor.

It is found in the cytoplasm. It catalyses the reaction L-fucose = L-fuculose. The protein operates within carbohydrate degradation; L-fucose degradation; L-lactaldehyde and glycerone phosphate from L-fucose: step 1/3. Converts the aldose L-fucose into the corresponding ketose L-fuculose. The protein is L-fucose isomerase of Escherichia coli O139:H28 (strain E24377A / ETEC).